Consider the following 429-residue polypeptide: Glucose-1-phosphate adenylyltransferase (429 aa).

Alpha-D-glucose 1-phosphate contacts are provided by residues Gly162, 177–178 (EK), and Ser209.

This sequence belongs to the bacterial/plant glucose-1-phosphate adenylyltransferase family. In terms of assembly, homotetramer.

The enzyme catalyses alpha-D-glucose 1-phosphate + ATP + H(+) = ADP-alpha-D-glucose + diphosphate. It functions in the pathway glycan biosynthesis; glycogen biosynthesis. Functionally, involved in the biosynthesis of ADP-glucose, a building block required for the elongation reactions to produce glycogen. Catalyzes the reaction between ATP and alpha-D-glucose 1-phosphate (G1P) to produce pyrophosphate and ADP-Glc. The protein is Glucose-1-phosphate adenylyltransferase of Rippkaea orientalis (strain PCC 8801 / RF-1) (Cyanothece sp. (strain PCC 8801)).